The primary structure comprises 1020 residues: Calcium-transporting ATPase 10, plasma membrane-type (1020 aa).

Residues 1–175 (MESYLEENFG…FVWEALQDTT (175 aa)) lie on the Cytoplasmic side of the membrane. The interval 21 to 32 (ALRRWRKLCGVV) is interaction with calmodulin. The next 2 membrane-spanning stretches (helical) occupy residues 176–196 (LIILAVCAFVSLVVGIAMEGW) and 199–219 (GAHDGLGIVASILLVVFVTAT). The Cytoplasmic portion of the chain corresponds to 220–263 (SDYRQSLQFKDLDKEKKKIQVQVTRNGFRQRLSIYDLLPGDVVH). Helical transmembrane passes span 264 to 284 (LAIGDQVPADGLFISGFSLLI) and 352 to 372 (GVATIIGKIGLFFAVITFIVL). Topologically, residues 373–400 (SQGLISKKYHEGLLLSWSGDDALEMLEH) are cytoplasmic. A helical membrane pass occupies residues 401–421 (FAIAVTIVVVAVPEGLPLAVT). D456 acts as the 4-aspartylphosphate intermediate in catalysis. Residues D758 and D762 each coordinate Mg(2+). The helical transmembrane segment at 843–863 (LTAVQLLWVNMIMDTLGALAL) threads the bilayer. The Cytoplasmic segment spans residues 864-887 (ATEPPNDDLMKREPVGRTGKFITN). 2 helical membrane-spanning segments follow: residues 888–907 (VMWRNILGQSFYQFIVMWYL) and 924–944 (VVLNTIIFNSFVFCQVFNEIS). Residues 945–961 (SREMEKINVLRGILKNY) are Cytoplasmic-facing. The next 2 membrane-spanning stretches (helical) occupy residues 962-982 (VFLGVLTSTVVFQFIMVQFLG) and 995-1015 (WIASVLLGLIGMPISAIIKLL). Residues 1016 to 1020 (PVGSS) lie on the Cytoplasmic side of the membrane.

It belongs to the cation transport ATPase (P-type) (TC 3.A.3) family. Type IIB subfamily.

It localises to the membrane. It catalyses the reaction Ca(2+)(in) + ATP + H2O = Ca(2+)(out) + ADP + phosphate + H(+). Its activity is regulated as follows. Activated by calmodulin. In terms of biological role, this magnesium-dependent enzyme catalyzes the hydrolysis of ATP coupled with the translocation of calcium from the cytosol out of the cell, into the endoplasmic reticulum, or into organelles. This Oryza sativa subsp. japonica (Rice) protein is Calcium-transporting ATPase 10, plasma membrane-type.